A 1011-amino-acid chain; its full sequence is Cell division cycle-associated protein 2 (1011 aa).

Residues 1 to 22 (MDTCSQESEPLQTKESPINNAG) are compositionally biased toward polar residues. A disordered region spans residues 1–26 (MDTCSQESEPLQTKESPINNAGKTPL). Phosphoserine is present on residues Ser-125, Ser-130, Ser-209, Ser-293, and Ser-310. Residue Thr-313 is modified to Phosphothreonine. The region spanning 380–440 (KRKRVTFGED…PEWLPQPNFD (61 aa)) is the PP1-binding domain. A phosphoserine mark is found at Ser-391 and Ser-398. Disordered regions lie at residues 395–438 (LDES…PQPN) and 522–544 (PCKE…KVLP). Position 403 is a phosphothreonine (Thr-403). Over residues 418–431 (SSLSPPLLEQSPVP) the composition is skewed to low complexity. Residue Ser-428 is modified to Phosphoserine. The span at 522–543 (PCKEKKTNRRKSQESKHADKVL) shows a compositional bias: basic and acidic residues. 3 positions are modified to phosphoserine: Ser-583, Ser-702, and Ser-747. Residue Lys-753 forms a Glycyl lysine isopeptide (Lys-Gly) (interchain with G-Cter in SUMO2) linkage. Over residues 790–803 (DQRKVSKSQGEDLG) the composition is skewed to basic and acidic residues. Disordered regions lie at residues 790 to 835 (DQRK…GLHL) and 896 to 1011 (GLVW…LSEN). The segment covering 931 to 945 (SSRQDPCTLPSTSSE) has biased composition (polar residues). A Phosphoserine modification is found at Ser-967. Residues 968-983 (FCTSTLANPKSTTQSR) are compositionally biased toward polar residues. The segment covering 993 to 1011 (QKRENTLQETSRESDLSEN) has biased composition (basic and acidic residues).

As to quaternary structure, interacts with PPP1CC. Phosphorylated by CDK1. May regulate its subcellular location.

It is found in the nucleus. Its function is as follows. Regulator of chromosome structure during mitosis required for condensin-depleted chromosomes to retain their compact architecture through anaphase. Acts by mediating the recruitment of phopsphatase PP1-gamma subunit (PPP1CC) to chromatin at anaphase and into the following interphase. At anaphase onset, its association with chromatin targets a pool of PPP1CC to dephosphorylate substrates. This Bos taurus (Bovine) protein is Cell division cycle-associated protein 2 (CDCA2).